A 353-amino-acid polypeptide reads, in one-letter code: Photosystem II protein D1 (353 aa).

Thr-2 is subject to N-acetylthreonine. Thr-2 carries the post-translational modification Phosphothreonine. Transmembrane regions (helical) follow at residues 29–46 (YIGWFGVLMIPTLLTATS), 118–133 (HFLLGVACYMGREWEL), and 142–156 (WIAVAYSAPVAAATA). Residue His-118 participates in chlorophyll a binding. Tyr-126 is a pheophytin a binding site. [CaMn4O5] cluster is bound by residues Asp-170 and Glu-189. The helical transmembrane segment at 197–218 (FHMLGVAGVFGGSLFSAMHGSL) threads the bilayer. His-198 contacts chlorophyll a. A quinone-binding positions include His-215 and 264–265 (SF). Residue His-215 participates in Fe cation binding. Residue His-272 participates in Fe cation binding. The helical transmembrane segment at 274–288 (FLTAWPVVGIWFTAL) threads the bilayer. [CaMn4O5] cluster is bound by residues His-332, Glu-333, Asp-342, and Ala-344. Positions 345–353 (VVEAPSTNG) are excised as a propeptide.

The protein belongs to the reaction center PufL/M/PsbA/D family. PSII is composed of 1 copy each of membrane proteins PsbA, PsbB, PsbC, PsbD, PsbE, PsbF, PsbH, PsbI, PsbJ, PsbK, PsbL, PsbM, PsbT, PsbX, PsbY, PsbZ, Psb30/Ycf12, at least 3 peripheral proteins of the oxygen-evolving complex and a large number of cofactors. It forms dimeric complexes. It depends on The D1/D2 heterodimer binds P680, chlorophylls that are the primary electron donor of PSII, and subsequent electron acceptors. It shares a non-heme iron and each subunit binds pheophytin, quinone, additional chlorophylls, carotenoids and lipids. D1 provides most of the ligands for the Mn4-Ca-O5 cluster of the oxygen-evolving complex (OEC). There is also a Cl(-1) ion associated with D1 and D2, which is required for oxygen evolution. The PSII complex binds additional chlorophylls, carotenoids and specific lipids. as a cofactor. Tyr-161 forms a radical intermediate that is referred to as redox-active TyrZ, YZ or Y-Z. Post-translationally, C-terminally processed by CTPA; processing is essential to allow assembly of the oxygen-evolving complex and thus photosynthetic growth.

The protein resides in the plastid. The protein localises to the chloroplast thylakoid membrane. The enzyme catalyses 2 a plastoquinone + 4 hnu + 2 H2O = 2 a plastoquinol + O2. Functionally, photosystem II (PSII) is a light-driven water:plastoquinone oxidoreductase that uses light energy to abstract electrons from H(2)O, generating O(2) and a proton gradient subsequently used for ATP formation. It consists of a core antenna complex that captures photons, and an electron transfer chain that converts photonic excitation into a charge separation. The D1/D2 (PsbA/PsbD) reaction center heterodimer binds P680, the primary electron donor of PSII as well as several subsequent electron acceptors. This is Photosystem II protein D1 from Aethionema cordifolium (Lebanon stonecress).